Reading from the N-terminus, the 257-residue chain is tRNA (cytidine/uridine-2'-O-)-methyltransferase TrmJ (257 aa).

Residues 79–81, Gly-114, Ile-134, and 141–143 each bind S-adenosyl-L-methionine; these read TSA and SSL.

It belongs to the class IV-like SAM-binding methyltransferase superfamily. RNA methyltransferase TrmH family. Homodimer.

It localises to the cytoplasm. The catalysed reaction is cytidine(32) in tRNA + S-adenosyl-L-methionine = 2'-O-methylcytidine(32) in tRNA + S-adenosyl-L-homocysteine + H(+). It carries out the reaction uridine(32) in tRNA + S-adenosyl-L-methionine = 2'-O-methyluridine(32) in tRNA + S-adenosyl-L-homocysteine + H(+). Functionally, catalyzes the formation of 2'O-methylated cytidine (Cm32) or 2'O-methylated uridine (Um32) at position 32 in tRNA. The chain is tRNA (cytidine/uridine-2'-O-)-methyltransferase TrmJ (trmJ) from Yersinia enterocolitica serotype O:8 / biotype 1B (strain NCTC 13174 / 8081).